The sequence spans 195 residues: Phosphoribosylglycinamide formyltransferase (195 aa).

12 to 14 (GSN) lines the N(1)-(5-phospho-beta-D-ribosyl)glycinamide pocket. Residues Lys-65, 90 to 93 (MRLI), and Asn-107 contribute to the (6R)-10-formyltetrahydrofolate site. The active-site Proton donor is the His-109.

Belongs to the GART family.

It catalyses the reaction N(1)-(5-phospho-beta-D-ribosyl)glycinamide + (6R)-10-formyltetrahydrofolate = N(2)-formyl-N(1)-(5-phospho-beta-D-ribosyl)glycinamide + (6S)-5,6,7,8-tetrahydrofolate + H(+). It functions in the pathway purine metabolism; IMP biosynthesis via de novo pathway; N(2)-formyl-N(1)-(5-phospho-D-ribosyl)glycinamide from N(1)-(5-phospho-D-ribosyl)glycinamide (10-formyl THF route): step 1/1. Its function is as follows. Catalyzes the transfer of a formyl group from 10-formyltetrahydrofolate to 5-phospho-ribosyl-glycinamide (GAR), producing 5-phospho-ribosyl-N-formylglycinamide (FGAR) and tetrahydrofolate. In Bacillus subtilis (strain 168), this protein is Phosphoribosylglycinamide formyltransferase.